We begin with the raw amino-acid sequence, 381 residues long: Cell division protein FtsZ (381 aa).

The segment at 1-25 (MKFINDAIKESEKREKPSSSSMNSE) is disordered. Positions 7–17 (AIKESEKREKP) are enriched in basic and acidic residues. Residues 48–52 (GAGNN), 135–137 (GTG), E166, R170, and D213 each bind GTP.

This sequence belongs to the FtsZ family. Homodimer. Polymerizes to form a dynamic ring structure in a strictly GTP-dependent manner. Interacts directly with several other division proteins.

It is found in the cytoplasm. Its function is as follows. Essential cell division protein that forms a contractile ring structure (Z ring) at the future cell division site. The regulation of the ring assembly controls the timing and the location of cell division. One of the functions of the FtsZ ring is to recruit other cell division proteins to the septum to produce a new cell wall between the dividing cells. Binds GTP and shows GTPase activity. This is Cell division protein FtsZ from Methanothermobacter thermautotrophicus (strain ATCC 29096 / DSM 1053 / JCM 10044 / NBRC 100330 / Delta H) (Methanobacterium thermoautotrophicum).